The following is a 31-amino-acid chain: Chassatide C5 (31 aa).

The segment at residues 1–31 is a cross-link (cyclopeptide (Gly-Asn)); it reads GVIPCGESCVFIPCISSVVGCSCKNKVCYRN. Disulfide bonds link Cys-5–Cys-21, Cys-9–Cys-23, and Cys-14–Cys-28.

In terms of processing, this is a cyclic peptide. As to expression, expressed in pedicel, root and stem but not in leaf and fruit (at protein level).

Its function is as follows. Probably participates in a plant defense mechanism. The sequence is that of Chassatide C5 from Chassalia chartacea (Chassalia curviflora).